We begin with the raw amino-acid sequence, 132 residues long: Small ribosomal subunit protein uS8c (132 aa).

It belongs to the universal ribosomal protein uS8 family. Part of the 30S ribosomal subunit.

It localises to the plastid. The protein localises to the chloroplast. Its function is as follows. One of the primary rRNA binding proteins, it binds directly to 16S rRNA central domain where it helps coordinate assembly of the platform of the 30S subunit. This chain is Small ribosomal subunit protein uS8c (rps8), found in Trieres chinensis (Marine centric diatom).